A 383-amino-acid polypeptide reads, in one-letter code: Acetyl-CoA acetyltransferase (383 aa).

Residue Cys85 is the Acyl-thioester intermediate of the active site. The CoA site is built by Cys206, Ser207, Ile209, and Lys328. His332 serves as the catalytic Proton acceptor.

The protein belongs to the thiolase-like superfamily. Thiolase family. As to quaternary structure, interacts with HMG-CoA synthase (HMGCS) that catalyzes the second step in the pathway and with a DUF35 protein. The acetoacetyl-CoA thiolase/HMG-CoA synthase complex channels the intermediate via a fused CoA-binding site, which allows for efficient coupling of the endergonic thiolase reaction with the exergonic HMGCS reaction.

It carries out the reaction 2 acetyl-CoA = acetoacetyl-CoA + CoA. The protein operates within metabolic intermediate biosynthesis; (R)-mevalonate biosynthesis; (R)-mevalonate from acetyl-CoA: step 1/3. Its function is as follows. Catalyzes the condensation of two acetyl-coA molecules into acetoacetyl-CoA. Functions in the mevalonate (MVA) pathway leading to isopentenyl diphosphate (IPP), a key precursor for the biosynthesis of isoprenoid compounds that are building blocks of archaeal membrane lipids. The polypeptide is Acetyl-CoA acetyltransferase (Methanothermobacter thermautotrophicus (strain ATCC 29096 / DSM 1053 / JCM 10044 / NBRC 100330 / Delta H) (Methanobacterium thermoautotrophicum)).